The sequence spans 478 residues: tRNA(Ile)-lysidine synthase (478 aa).

27-32 contacts ATP; sequence SGGSDS.

The protein belongs to the tRNA(Ile)-lysidine synthase family.

The protein resides in the cytoplasm. It catalyses the reaction cytidine(34) in tRNA(Ile2) + L-lysine + ATP = lysidine(34) in tRNA(Ile2) + AMP + diphosphate + H(+). Ligates lysine onto the cytidine present at position 34 of the AUA codon-specific tRNA(Ile) that contains the anticodon CAU, in an ATP-dependent manner. Cytidine is converted to lysidine, thus changing the amino acid specificity of the tRNA from methionine to isoleucine. The chain is tRNA(Ile)-lysidine synthase from Rickettsia conorii (strain ATCC VR-613 / Malish 7).